The sequence spans 264 residues: Protein Saci_1508 (264 aa).

Belongs to the CinA family.

This chain is Protein Saci_1508, found in Sulfolobus acidocaldarius (strain ATCC 33909 / DSM 639 / JCM 8929 / NBRC 15157 / NCIMB 11770).